The sequence spans 485 residues: Glutamyl-tRNA(Gln) amidotransferase subunit A (485 aa).

Active-site charge relay system residues include lysine 79 and serine 154. The active-site Acyl-ester intermediate is the serine 178.

It belongs to the amidase family. GatA subfamily. Heterotrimer of A, B and C subunits.

The enzyme catalyses L-glutamyl-tRNA(Gln) + L-glutamine + ATP + H2O = L-glutaminyl-tRNA(Gln) + L-glutamate + ADP + phosphate + H(+). In terms of biological role, allows the formation of correctly charged Gln-tRNA(Gln) through the transamidation of misacylated Glu-tRNA(Gln) in organisms which lack glutaminyl-tRNA synthetase. The reaction takes place in the presence of glutamine and ATP through an activated gamma-phospho-Glu-tRNA(Gln). In Clostridium botulinum (strain Kyoto / Type A2), this protein is Glutamyl-tRNA(Gln) amidotransferase subunit A.